The primary structure comprises 662 residues: Protein-arginine deiminase type-1 (662 aa).

N153, D155, D157, D164, D175, D178, Q350, E352, K363, D370, S371, N374, F408, and L411 together coordinate Ca(2+). C644 serves as the catalytic Nucleophile.

Belongs to the protein arginine deiminase family. Monomer. Ca(2+) is required as a cofactor. In terms of tissue distribution, expressed only in the epidermis and uterus.

It localises to the cytoplasm. The catalysed reaction is L-arginyl-[protein] + H2O = L-citrullyl-[protein] + NH4(+). Catalyzes the deimination of arginine residues of proteins. The polypeptide is Protein-arginine deiminase type-1 (Padi1) (Mus musculus (Mouse)).